The sequence spans 195 residues: Calcineurin B homologous protein 1 (195 aa).

A lipid anchor (N-myristoyl glycine) is attached at Gly2. The short motif at 2-6 (GSRAS) is the Necessary for association with microtubule and interaction with GAPDH element. EF-hand domains are found at residues 26–61 (SQIT…AINP), 66–101 (IINA…KSKD), 110–145 (SRSN…MVGV), and 151–186 (QLGS…VDVE). The Ca(2+) site is built by Asp123, Asp125, Asp127, Lys129, and Glu134. The short motif at 138–147 (VLRMMVGVNI) is the Nuclear export signal 1 element. The Ca(2+) site is built by Asp164, Asp166, Asp168, and Glu175. Residues 176-185 (FVKVLEKVDV) carry the Nuclear export signal 2 motif.

This sequence belongs to the calcineurin regulatory subunit family. CHP subfamily. Monomer. Interacts with STK17B; the interaction occurs in a calcium-independent manner and induces the translocation of CHP1 from the Golgi to the nucleus. Interacts with GAPDH; the interaction is direct, occurs in a N-myristoylation-dependent manner and facilitates the ability of CHP1 to bind microtubules. Interacts with KIF1B (via the C-terminal end of the kinesin-motor domain); the interaction occurs in a calcium-dependent manner. Associates (via C-terminal domain) with microtubules; the association occurs with polymerized microtubules during the cell cycle in a myristoylation- and calcium-independent manner and is enhanced by GAPDH. Interacts with PPP3CA. Interacts with SLC9A1/NHE1 (via the cytoplasmic C-terminal domain); the interaction occurs at the plasma membrane in a calcium-dependent manner and at a domain that is critical for growth factor stimulation of the exchanger. Interacts with SLC9A3; increases SLC9A3 trafficking and activity at the plasma membrane. Phosphorylated; decreased phosphorylation is associated with an increase in SLC9A1/NHE1 Na(+)/H(+) exchange activity. Phosphorylation occurs in serum-dependent manner. The phosphorylation state may regulate the binding to SLC9A1/NHE1. In terms of processing, both N-myristoylation and calcium-mediated conformational changes are essential for its function in exocytic traffic. N-myristoylation is required for its association with microtubules and interaction with GAPDH, but not for the constitutive association to membranes.

Its subcellular location is the nucleus. The protein resides in the cytoplasm. It is found in the cytoskeleton. The protein localises to the endomembrane system. It localises to the endoplasmic reticulum-Golgi intermediate compartment. Its subcellular location is the endoplasmic reticulum. The protein resides in the cell membrane. It is found in the membrane. Its function is as follows. Calcium-binding protein involved in different processes such as regulation of vesicular trafficking, plasma membrane Na(+)/H(+) exchanger and gene transcription. Involved in the constitutive exocytic membrane traffic. Mediates the association between microtubules and membrane-bound organelles of the endoplasmic reticulum and Golgi apparatus and is also required for the targeting and fusion of transcytotic vesicles (TCV) with the plasma membrane. Functions as an integral cofactor in cell pH regulation by controlling plasma membrane-type Na(+)/H(+) exchange activity. Affects the pH sensitivity of SLC9A1/NHE1 by increasing its sensitivity at acidic pH. Required for the stabilization and localization of SLC9A1/NHE1 at the plasma membrane. Inhibits serum- and GTPase-stimulated Na(+)/H(+) exchange. Plays a role as an inhibitor of ribosomal RNA transcription by repressing the nucleolar UBF1 transcriptional activity. May sequester UBF1 in the nucleoplasm and limit its translocation to the nucleolus. Associates to the ribosomal gene promoter. Acts as a negative regulator of the calcineurin/NFAT signaling pathway. Inhibits NFAT nuclear translocation and transcriptional activity by suppressing the calcium-dependent calcineurin phosphatase activity. Also negatively regulates the kinase activity of the apoptosis-induced kinase STK17B. Inhibits both STK17B auto- and substrate-phosphorylations in a calcium-dependent manner. This Bos taurus (Bovine) protein is Calcineurin B homologous protein 1 (CHP1).